The chain runs to 353 residues: Ion-translocating oxidoreductase complex subunit D (353 aa).

Helical transmembrane passes span 20–40 (IMLL…YYFG), 44–64 (IIQV…ILHL), 77–108 (SALL…AIII), and 123–143 (PAMV…TSWL). T187 carries the post-translational modification FMN phosphoryl threonine. The next 4 helical transmembrane spans lie at 214-234 (VIAG…GVFL), 242-262 (WHIP…GWLL), 267-287 (LVTP…FFIA), and 301-318 (LLYG…RSYG).

It belongs to the NqrB/RnfD family. As to quaternary structure, the complex is composed of six subunits: RnfA, RnfB, RnfC, RnfD, RnfE and RnfG. FMN serves as cofactor.

The protein localises to the cell inner membrane. Part of a membrane-bound complex that couples electron transfer with translocation of ions across the membrane. This chain is Ion-translocating oxidoreductase complex subunit D, found in Erwinia tasmaniensis (strain DSM 17950 / CFBP 7177 / CIP 109463 / NCPPB 4357 / Et1/99).